Reading from the N-terminus, the 89-residue chain is Large ribosomal subunit protein eL34 (89 aa).

The segment at 1 to 29 is disordered; the sequence is MSAPRFRNGTFKRTLKRVPGGRKVEHYKK. A compositionally biased stretch (basic residues) spans 13–29; the sequence is RTLKRVPGGRKVEHYKK.

Belongs to the eukaryotic ribosomal protein eL34 family.

The chain is Large ribosomal subunit protein eL34 from Methanosphaera stadtmanae (strain ATCC 43021 / DSM 3091 / JCM 11832 / MCB-3).